A 172-amino-acid polypeptide reads, in one-letter code: C-phycocyanin beta chain (172 aa).

At N72 the chain carries N4-methylasparagine. Residues C82 and C153 each coordinate (2R,3E)-phycocyanobilin.

This sequence belongs to the phycobiliprotein family. Heterodimer of an alpha and a beta subunit, which further assembles into trimers and the trimers into hexamers. The basic functional unit of phycobiliproteins is a ring-shaped hexamer formed from two back-to-back trimers contacting via the alpha chain subunits. The trimers are composed of alpha/beta subunit heterodimers arranged around a three-fold axis of symmetry. The phycoerythrins also contain a gamma subunit which is located in the center of the hexamer. Post-translationally, contains two covalently linked bilin chromophores.

It localises to the plastid. The protein localises to the chloroplast thylakoid membrane. Its function is as follows. Light-harvesting photosynthetic bile pigment-protein from the phycobiliprotein complex (phycobilisome, PBS). Phycocyanin is the major phycobiliprotein in the PBS rod. This Aglaothamnion neglectum (Red alga) protein is C-phycocyanin beta chain (cpcB).